We begin with the raw amino-acid sequence, 276 residues long: Putative pyruvate, phosphate dikinase regulatory protein (276 aa).

154-161 is a binding site for ADP; that stretch reads GVSRTSKS.

The protein belongs to the pyruvate, phosphate/water dikinase regulatory protein family. PDRP subfamily.

The enzyme catalyses N(tele)-phospho-L-histidyl/L-threonyl-[pyruvate, phosphate dikinase] + ADP = N(tele)-phospho-L-histidyl/O-phospho-L-threonyl-[pyruvate, phosphate dikinase] + AMP + H(+). It catalyses the reaction N(tele)-phospho-L-histidyl/O-phospho-L-threonyl-[pyruvate, phosphate dikinase] + phosphate + H(+) = N(tele)-phospho-L-histidyl/L-threonyl-[pyruvate, phosphate dikinase] + diphosphate. Bifunctional serine/threonine kinase and phosphorylase involved in the regulation of the pyruvate, phosphate dikinase (PPDK) by catalyzing its phosphorylation/dephosphorylation. The chain is Putative pyruvate, phosphate dikinase regulatory protein from Wolbachia pipientis wMel.